A 663-amino-acid polypeptide reads, in one-letter code: Glucans biosynthesis glucosyltransferase H (663 aa).

6 helical membrane-spanning segments follow: residues 64-86, 101-123, 413-435, 470-492, 558-580, and 584-606; these read WMLGLMTIAMGVAGWKASFDTIA, LAPLFLALSLWFCTALIGFVVLM, LVIGVLSYALSPLWFFCLSAGLI, AWAMIITFVLLFGPKILGAILVL, EAWAAMGWISLSGLILAASFWFT, and LTATAPILAGLVLAVPLTMLGAH.

It belongs to the glycosyltransferase 2 family. OpgH subfamily.

It is found in the cell inner membrane. It participates in glycan metabolism; osmoregulated periplasmic glucan (OPG) biosynthesis. In terms of biological role, involved in the biosynthesis of osmoregulated periplasmic glucans (OPGs). The sequence is that of Glucans biosynthesis glucosyltransferase H from Caulobacter vibrioides (strain ATCC 19089 / CIP 103742 / CB 15) (Caulobacter crescentus).